The chain runs to 344 residues: Holliday junction branch migration complex subunit RuvB (344 aa).

The tract at residues 1–182 (MRIEALNTAP…FGINSRLDYY (182 aa)) is large ATPase domain (RuvB-L). ATP contacts are provided by residues I21, R22, G63, K66, T67, T68, 129–131 (EDY), R172, Y182, and R219. T67 contacts Mg(2+). Positions 183-253 (NPELLQSIII…VARRTLESLE (71 aa)) are small ATPAse domain (RuvB-S). The head domain (RuvB-H) stretch occupies residues 256-344 (EGGLDDMDKK…GSLFDTAEDG (89 aa)). The DNA site is built by R311 and R316.

The protein belongs to the RuvB family. Homohexamer. Forms an RuvA(8)-RuvB(12)-Holliday junction (HJ) complex. HJ DNA is sandwiched between 2 RuvA tetramers; dsDNA enters through RuvA and exits via RuvB. An RuvB hexamer assembles on each DNA strand where it exits the tetramer. Each RuvB hexamer is contacted by two RuvA subunits (via domain III) on 2 adjacent RuvB subunits; this complex drives branch migration. In the full resolvosome a probable DNA-RuvA(4)-RuvB(12)-RuvC(2) complex forms which resolves the HJ.

It is found in the cytoplasm. The catalysed reaction is ATP + H2O = ADP + phosphate + H(+). Its function is as follows. The RuvA-RuvB-RuvC complex processes Holliday junction (HJ) DNA during genetic recombination and DNA repair, while the RuvA-RuvB complex plays an important role in the rescue of blocked DNA replication forks via replication fork reversal (RFR). RuvA specifically binds to HJ cruciform DNA, conferring on it an open structure. The RuvB hexamer acts as an ATP-dependent pump, pulling dsDNA into and through the RuvAB complex. RuvB forms 2 homohexamers on either side of HJ DNA bound by 1 or 2 RuvA tetramers; 4 subunits per hexamer contact DNA at a time. Coordinated motions by a converter formed by DNA-disengaged RuvB subunits stimulates ATP hydrolysis and nucleotide exchange. Immobilization of the converter enables RuvB to convert the ATP-contained energy into a lever motion, pulling 2 nucleotides of DNA out of the RuvA tetramer per ATP hydrolyzed, thus driving DNA branch migration. The RuvB motors rotate together with the DNA substrate, which together with the progressing nucleotide cycle form the mechanistic basis for DNA recombination by continuous HJ branch migration. Branch migration allows RuvC to scan DNA until it finds its consensus sequence, where it cleaves and resolves cruciform DNA. This Chlorobaculum tepidum (strain ATCC 49652 / DSM 12025 / NBRC 103806 / TLS) (Chlorobium tepidum) protein is Holliday junction branch migration complex subunit RuvB.